The sequence spans 202 residues: IMP cyclohydrolase (202 aa).

The segment at 29-52 (VQRDGTVTVEPTPDAPETDNPYIS) is disordered.

Belongs to the archaeal IMP cyclohydrolase family.

It carries out the reaction IMP + H2O = 5-formamido-1-(5-phospho-D-ribosyl)imidazole-4-carboxamide. It participates in purine metabolism; IMP biosynthesis via de novo pathway; IMP from 5-formamido-1-(5-phospho-D-ribosyl)imidazole-4-carboxamide: step 1/1. Catalyzes the cyclization of 5-formylamidoimidazole-4-carboxamide ribonucleotide to IMP. In Haloarcula marismortui (strain ATCC 43049 / DSM 3752 / JCM 8966 / VKM B-1809) (Halobacterium marismortui), this protein is IMP cyclohydrolase.